The chain runs to 1244 residues: Membrane-associated phosphatidylinositol transfer protein 1 (1244 aa).

T59 carries the post-translational modification Phosphothreonine. Disordered stretches follow at residues 258–331 (KCNT…QSLS) and 339–358 (ARDS…EGFS). T287 is subject to Phosphothreonine; by CDK1. Over residues 299–319 (ASPDASFGKQWSSSSRSSYSS) the composition is skewed to low complexity. A phosphoserine mark is found at S300, S304, S319, S326, S329, S342, S345, S346, and S373. Residue S382 is modified to Phosphoserine; by CDK1. Positions 581 to 682 (AGTGSRGSSR…SSEAPDGPSS (102 aa)) are disordered. S593, S600, and S621 each carry phosphoserine. Over residues 643 to 658 (GSQNSLQAAPATTSSW) the composition is skewed to polar residues. A DDHD domain is found at 686–880 (LDFKVSGFFL…VAFILRQVIE (195 aa)). Position 896 is a phosphoserine (S896). The segment at 1206–1244 (QLLRSRGPSQAEREGPGTPPTTLARGKARSISLKLDSEE) is disordered. Omega-N-methylarginine is present on residues R1211 and R1218. The residue at position 1237 (S1237) is a Phosphoserine.

The protein belongs to the PtdIns transfer protein family. PI transfer class IIA subfamily. In terms of assembly, interacts with PIK4CA. Interacts with PTK2B via its C-terminus. Interacts with RHOA. Has higher affinity for the inactive, GDP-bound form of RHOA. The CDK1-phosphorylated form interacts with PLK1. Interacts with VAPB. Phosphorylated on multiple sites by CDK1 at the onset of mitosis. Phosphorylation facilitates dissociation from the Golgi complex and is required for interaction with PLK1. In terms of processing, phosphorylated on threonine residues upon treatment with oleic acid. Post-translationally, phosphorylated on tyrosine residues by PTK2B. In terms of tissue distribution, ubiquitous.

The protein resides in the cytoplasm. Its subcellular location is the golgi apparatus. It is found in the golgi stack membrane. The protein localises to the endoplasmic reticulum membrane. It localises to the lipid droplet. The protein resides in the cleavage furrow. Its subcellular location is the midbody. It carries out the reaction a 1,2-diacyl-sn-glycero-3-phospho-(1D-myo-inositol)(in) = a 1,2-diacyl-sn-glycero-3-phospho-(1D-myo-inositol)(out). Catalyzes the transfer of phosphatidylinositol (PI) between membranes. Binds PI, phosphatidylcholine (PC) and phosphatidic acid (PA) with the binding affinity order of PI &gt; PA &gt; PC. Regulates RHOA activity, and plays a role in cytoskeleton remodeling. Necessary for normal completion of cytokinesis. Plays a role in maintaining normal diacylglycerol levels in the Golgi apparatus. Necessary for maintaining the normal structure of the endoplasmic reticulum and the Golgi apparatus. Required for protein export from the endoplasmic reticulum and the Golgi. Binds calcium ions. This Homo sapiens (Human) protein is Membrane-associated phosphatidylinositol transfer protein 1 (PITPNM1).